The sequence spans 287 residues: Mitochondrial glycine transporter A (287 aa).

Solcar repeat units follow at residues histidine 7 to arginine 97, proline 104 to leucine 188, and tyrosine 198 to glutamine 282. A run of 6 helical transmembrane segments spans residues phenylalanine 13–glutamine 38, glycine 72–tyrosine 98, valine 110–glutamate 135, glycine 163–lysine 186, alanine 202–isoleucine 228, and glycine 257–valine 275.

The protein belongs to the mitochondrial carrier (TC 2.A.29) family. SLC25A38 subfamily. As to expression, at 24 hours post-fertilization, expressed predominantly in posterior blood island, posterior cardinal vein and circulating blood, as well as in somites, brain and retina. At 34 hours post-fertilization, becomes restricted to posterior blood island and circulating blood.

The protein resides in the mitochondrion inner membrane. It catalyses the reaction glycine(in) = glycine(out). Its function is as follows. Mitochondrial glycine transporter that imports glycine into the mitochondrial matrix. Plays an important role in providing glycine for the first enzymatic step in heme biosynthesis, the condensation of glycine with succinyl-CoA to produce 5-aminolevulinate (ALA) in the mitochondrial matrix. Required during erythropoiesis. In terms of biological role, may play a role as pro-apoptotic protein that induces caspase-dependent apoptosis. This Danio rerio (Zebrafish) protein is Mitochondrial glycine transporter A (slc25a38a).